Reading from the N-terminus, the 174-residue chain is Calcineurin subunit B (174 aa).

4 EF-hand domains span residues 21 to 56, 60 to 88, 90 to 125, and 131 to 166; these read EEIE…ASNP, RLFS…FSVH, NKEE…MVGT, and QLQQ…SNVT. Ca(2+) contacts are provided by Asp34, Asn36, Ser38, Ser40, Glu45, Asp66, Asp68, Asp72, Glu77, Asp103, Asp105, Asp107, Tyr109, Glu114, Asp144, Asp146, Asp148, Lys150, and Glu155.

The protein belongs to the calcineurin regulatory subunit family. As to quaternary structure, composed of a catalytic subunit (A) and a regulatory subunit (B).

Its function is as follows. Regulatory subunit of calcineurin, a calcium-dependent, calmodulin stimulated protein phosphatase. Confers calcium sensitivity. This is Calcineurin subunit B (cnb1) from Schizosaccharomyces pombe (strain 972 / ATCC 24843) (Fission yeast).